Reading from the N-terminus, the 285-residue chain is Ribosomal RNA small subunit methyltransferase A (285 aa).

Asn30, Leu32, Gly57, Glu78, Asp101, and Asn121 together coordinate S-adenosyl-L-methionine.

Belongs to the class I-like SAM-binding methyltransferase superfamily. rRNA adenine N(6)-methyltransferase family. RsmA subfamily.

It localises to the cytoplasm. It carries out the reaction adenosine(1518)/adenosine(1519) in 16S rRNA + 4 S-adenosyl-L-methionine = N(6)-dimethyladenosine(1518)/N(6)-dimethyladenosine(1519) in 16S rRNA + 4 S-adenosyl-L-homocysteine + 4 H(+). Its function is as follows. Specifically dimethylates two adjacent adenosines (A1518 and A1519) in the loop of a conserved hairpin near the 3'-end of 16S rRNA in the 30S particle. May play a critical role in biogenesis of 30S subunits. In Treponema pallidum (strain Nichols), this protein is Ribosomal RNA small subunit methyltransferase A.